The chain runs to 182 residues: uncharacterized protein (182 aa).

2 disordered regions span residues 1–49 (MAAP…DGGS) and 126–171 (QGGH…VHAQ). Residues 17 to 39 (ELLEKAARLERGPPPRGDPEAVG) show a composition bias toward basic and acidic residues.

This is an uncharacterized protein from Homo sapiens (Human).